The sequence spans 131 residues: Large ribosomal subunit protein bL19 (131 aa).

The interval 112–131 is disordered; it reads KSARIAERAGGPKASASTEA.

This sequence belongs to the bacterial ribosomal protein bL19 family.

Functionally, this protein is located at the 30S-50S ribosomal subunit interface and may play a role in the structure and function of the aminoacyl-tRNA binding site. The chain is Large ribosomal subunit protein bL19 from Caulobacter vibrioides (strain ATCC 19089 / CIP 103742 / CB 15) (Caulobacter crescentus).